A 354-amino-acid polypeptide reads, in one-letter code: Protein sex-lethal (354 aa).

The tract at residues 1–21 (MYGNNNPGSNNNNGGYPPYGY) is disordered. RRM domains are found at residues 125–203 (TNLI…YARP) and 211–291 (TNLY…LAEE).

Part of a complex containing fl(2)d, Sxl and vir. Part of a complex composed of at least mei-P26, bam, bgcn and Sxl; this complex is involved in translational repression of nanos mRNA. interacts with mei-p26. Interacts with nito. Interacts with Unr; cooperates with Unr to prevent translation of msl-2 transcripts. Interacts with how; promoting nuclear retention of msl-2 transcripts. As to expression, expressed in somatic tissues, but not in the pole cells, which are the precursors of the germline. Expressed in the anterior of the germarium.

Its subcellular location is the nucleus. It localises to the cytoplasm. Sex determination switch protein, which controls sexual development and dosage compensation in females. Sxl protein is only active in females: it is inactive in males throughout development. Acts as a mRNA-binding protein, which specifically binds to a subset of pre-mRNAs and mRNAs and regulates their processing and/or translation. Binds nanos mRNA and is involved in bam-bgcn mediated repression of nanos mRNA translation. Promotes sexual development by controlling the female-specific alternative splicing of the transformer (tra) pre-mRNA: binds tightly to a characteristic uridine-rich polypyrimidine tract at the non-sex specific 3' splice site in one of the tra introns, preventing the general splicing factor U2AF from binding to this site and forcing it to bind to the female-specific 3' splice site. Acts as an inhibitor of dosage compensation in females by preventing production of msl-2 protein, an essential component of the MSL complex, the complex that mediates X-chromosome dosage compensation. Specifically binds to uridine stretches in both the 5'- and 3'-UTR of msl-2 transcripts. Sxl first acts at the splicing level by promoting retention of an intron in the 5' UTR of msl-2 pre-mRNA. The retained intron contains Sxl-binding sites that are required for subsequent steps of repression: after msl-2 mRNA export into the cytoplasm, Sxl coordinates its translational repression by targeting early steps of translation initiation. Together with how, Sxl also prevents production of msl-2 protein by preventing nuclear export of msl-2 transcripts. Functionally, embryo-specific product, which is expressed early only in female embryos and specifies female-adult specific splicing. This is Protein sex-lethal from Drosophila melanogaster (Fruit fly).